A 360-amino-acid chain; its full sequence is MADLEDLKTALLSDIAAAADESALEAVRVASLGKKGSISALLSGLGKMSPDERKTEGAAINALKDAVNTALSARRGVLKDAALEARLANETLDVTLPVRPQGAAAGRIHPISQVMDELAEIFADMGFSIAEGPDIETDDYNFTKLNFPPDHPARDMHDTFFFHPDKHGRRKVLRTHTSPVQVRTMLAQKPPIRVICPGRTYRCDSDQTHTPMFHQVEGLVIDRSSNLGHLKWILEEFLKAFFETSTVNLRFRPSYFPFTEPSMEVDVQCSRKDGEIRFGEGSDWLEILGCGMVHPNVLRNCGLDPEIFQGFAWGIGIDRLAMLKYGMPDLRAFFEADVRWLKHYGFRPLDFPSLASGLSP.

Residue Glu-260 coordinates Mg(2+).

The protein belongs to the class-II aminoacyl-tRNA synthetase family. Phe-tRNA synthetase alpha subunit type 1 subfamily. Tetramer of two alpha and two beta subunits. It depends on Mg(2+) as a cofactor.

Its subcellular location is the cytoplasm. It carries out the reaction tRNA(Phe) + L-phenylalanine + ATP = L-phenylalanyl-tRNA(Phe) + AMP + diphosphate + H(+). This is Phenylalanine--tRNA ligase alpha subunit from Methylocella silvestris (strain DSM 15510 / CIP 108128 / LMG 27833 / NCIMB 13906 / BL2).